We begin with the raw amino-acid sequence, 410 residues long: Neuroserpin (410 aa).

An N-terminal signal peptide occupies residues 1–16 (MYFLGLLSLLVLPSKA). Residues Asn157 and Asn401 are each glycosylated (N-linked (GlcNAc...) asparagine).

It belongs to the serpin family. As to expression, detected in embryonic ocular vitreous fluid (at protein level). In the embryo present in retina, brain, cerebellum and spinal cord. In adult, predominantly expressed in the brain.

It is found in the secreted. Its subcellular location is the cytoplasmic vesicle. The protein localises to the secretory vesicle lumen. The protein resides in the perikaryon. Functionally, serine protease inhibitor that inhibits plasminogen activators and plasmin but not thrombin. May be involved in the formation or reorganization of synaptic connections as well as for synaptic plasticity in the adult nervous system. May protect neurons from cell damage by tissue-type plasminogen activator. The sequence is that of Neuroserpin (SERPINI1) from Gallus gallus (Chicken).